Reading from the N-terminus, the 287-residue chain is IQ domain-containing protein K (287 aa).

The polypeptide is IQ domain-containing protein K (IQCK) (Homo sapiens (Human)).